The following is a 723-amino-acid chain: Nicastrin (723 aa).

Residues 1–16 form the signal peptide; the sequence is MKKWLVIVLIIAGIRC. Residues 17–678 lie on the Extracellular side of the membrane; sequence DGFSDQVFRT…ESVNLYLMED (662 aa). Residues Asn40, Asn181, Asn271, Asn328, Asn409, and Asn627 are each glycosylated (N-linked (GlcNAc...) asparagine). Residues 679–699 form a helical membrane-spanning segment; it reads ASFEYTMILIAVISALLSIFA. The Cytoplasmic segment spans residues 700–723; the sequence is VGRCSETTFIVDEGEPAAEGGEPL.

The protein belongs to the nicastrin family. As to quaternary structure, component of the gamma-secretase complex, a complex probably composed of the presenilin homodimer (sel-12, hop-1 or spe-4), nicastrin (aph-2), aph-1 and pen-2.

The protein resides in the membrane. Essential subunit of the gamma-secretase complex, an endoprotease complex that catalyzes the intramembrane cleavage of integral membrane proteins such as Notch (glp-1 or lin-12). It may represents a stabilizing cofactor required for the assembly of the gamma-secretase complex. The sequence is that of Nicastrin (aph-2) from Caenorhabditis elegans.